We begin with the raw amino-acid sequence, 69 residues long: Large ribosomal subunit protein bL32c (69 aa).

It belongs to the bacterial ribosomal protein bL32 family.

Its subcellular location is the plastid. It is found in the chloroplast. The sequence is that of Large ribosomal subunit protein bL32c (rpl32) from Marchantia polymorpha (Common liverwort).